The chain runs to 271 residues: Ribosomal RNA small subunit methyltransferase A (271 aa).

His-11, Leu-13, Gly-38, Glu-59, Asp-84, and Asn-109 together coordinate S-adenosyl-L-methionine.

This sequence belongs to the class I-like SAM-binding methyltransferase superfamily. rRNA adenine N(6)-methyltransferase family. RsmA subfamily.

It is found in the cytoplasm. The enzyme catalyses adenosine(1518)/adenosine(1519) in 16S rRNA + 4 S-adenosyl-L-methionine = N(6)-dimethyladenosine(1518)/N(6)-dimethyladenosine(1519) in 16S rRNA + 4 S-adenosyl-L-homocysteine + 4 H(+). In terms of biological role, specifically dimethylates two adjacent adenosines (A1518 and A1519) in the loop of a conserved hairpin near the 3'-end of 16S rRNA in the 30S particle. May play a critical role in biogenesis of 30S subunits. This chain is Ribosomal RNA small subunit methyltransferase A, found in Trichormus variabilis (strain ATCC 29413 / PCC 7937) (Anabaena variabilis).